The primary structure comprises 177 residues: ATP synthase subunit delta (177 aa).

The protein belongs to the ATPase delta chain family. In terms of assembly, F-type ATPases have 2 components, F(1) - the catalytic core - and F(0) - the membrane proton channel. F(1) has five subunits: alpha(3), beta(3), gamma(1), delta(1), epsilon(1). F(0) has three main subunits: a(1), b(2) and c(10-14). The alpha and beta chains form an alternating ring which encloses part of the gamma chain. F(1) is attached to F(0) by a central stalk formed by the gamma and epsilon chains, while a peripheral stalk is formed by the delta and b chains.

It is found in the cell membrane. Functionally, f(1)F(0) ATP synthase produces ATP from ADP in the presence of a proton or sodium gradient. F-type ATPases consist of two structural domains, F(1) containing the extramembraneous catalytic core and F(0) containing the membrane proton channel, linked together by a central stalk and a peripheral stalk. During catalysis, ATP synthesis in the catalytic domain of F(1) is coupled via a rotary mechanism of the central stalk subunits to proton translocation. Its function is as follows. This protein is part of the stalk that links CF(0) to CF(1). It either transmits conformational changes from CF(0) to CF(1) or is implicated in proton conduction. This is ATP synthase subunit delta from Buchnera aphidicola subsp. Schizaphis graminum (strain Sg).